A 239-amino-acid chain; its full sequence is LexA repressor (239 aa).

Positions phenylalanine 26–threonine 46 form a DNA-binding region, H-T-H motif. Positions arginine 80–alanine 108 are disordered. Catalysis depends on for autocatalytic cleavage activity residues serine 159 and lysine 197.

The protein belongs to the peptidase S24 family. As to quaternary structure, homodimer.

The catalysed reaction is Hydrolysis of Ala-|-Gly bond in repressor LexA.. Its function is as follows. Represses a number of genes involved in the response to DNA damage (SOS response), including recA and lexA. In the presence of single-stranded DNA, RecA interacts with LexA causing an autocatalytic cleavage which disrupts the DNA-binding part of LexA, leading to derepression of the SOS regulon and eventually DNA repair. This is LexA repressor from Rhizobium leguminosarum bv. trifolii (strain WSM2304).